The chain runs to 100 residues: UPF0213 protein YhbQ (100 aa).

Residues 2-77 (TPWFLYLIRT…KQLTKRQKER (76 aa)) form the GIY-YIG domain.

This sequence belongs to the UPF0213 family.

The polypeptide is UPF0213 protein YhbQ (Escherichia coli O1:K1 / APEC).